A 209-amino-acid polypeptide reads, in one-letter code: UPF0502 protein mll4256 (209 aa).

It belongs to the UPF0502 family.

In Mesorhizobium japonicum (strain LMG 29417 / CECT 9101 / MAFF 303099) (Mesorhizobium loti (strain MAFF 303099)), this protein is UPF0502 protein mll4256.